The following is a 760-amino-acid chain: Exostosin-1 (760 aa).

The Cytoplasmic portion of the chain corresponds to 1-6 (MQAKKR). Residues 7-25 (YILVFVSCAFLAYAYFGGY) form a helical; Signal-anchor for type II membrane protein membrane-spanning segment. At 26-760 (RLKVSPLRPR…KYRQIELVGS (735 aa)) the chain is on the lumenal side. 2 N-linked (GlcNAc...) asparagine glycosylation sites follow: N71 and N327. A UDP-N-acetyl-alpha-D-glucosamine-binding site is contributed by R437. An N-linked (GlcNAc...) asparagine glycan is attached at N476. The disordered stretch occupies residues 540 to 560 (LGGSTRSQGAGPTSQTTEGRP). Positions 541–560 (GGSTRSQGAGPTSQTTEGRP) are enriched in polar residues. The UDP-N-acetyl-alpha-D-glucosamine site is built by R565, D581, E582, D583, E669, D670, and R713. D583 lines the Mn(2+) pocket. The cysteines at positions 668 and 716 are disulfide-linked. D670 is an active-site residue.

The protein belongs to the glycosyltransferase 47 family. In terms of assembly, interacts with sau. Requires Mn(2+) as cofactor. As to expression, ubiquitously expressed in early embryos. Later (in stage 10 embryos), it is expressed at higher level in the nervous system. Ubiquitously expressed in wing imaginal disk.

It is found in the endoplasmic reticulum membrane. It localises to the golgi apparatus membrane. It carries out the reaction 3-O-{[(1-&gt;4)-beta-D-GlcA-(1-&gt;4)-alpha-D-GlcNAc](n)-(1-&gt;4)-beta-D-GlcA-(1-&gt;3)-beta-D-Gal-(1-&gt;3)-beta-D-Gal-(1-&gt;4)-beta-D-Xyl}-L-seryl-[protein] + UDP-N-acetyl-alpha-D-glucosamine = 3-O-{alpha-D-GlcNAc-[(1-&gt;4)-beta-D-GlcA-(1-&gt;4)-alpha-D-GlcNAc](n)-(1-&gt;4)-beta-D-GlcA-(1-&gt;3)-beta-D-Gal-(1-&gt;3)-beta-D-Gal-(1-&gt;4)-beta-D-Xyl}-L-seryl-[protein] + UDP + H(+). The catalysed reaction is 3-O-{alpha-D-GlcNAc-[(1-&gt;4)-beta-D-GlcA-(1-&gt;4)-alpha-D-GlcNAc](n)-(1-&gt;4)-beta-D-GlcA-(1-&gt;3)-beta-D-Gal-(1-&gt;3)-beta-D-Gal-(1-&gt;4)-beta-D-Xyl}-L-seryl-[protein] + UDP-alpha-D-glucuronate = 3-O-{[(1-&gt;4)-beta-D-GlcA-(1-&gt;4)-alpha-D-GlcNAc](n+1)-(1-&gt;4)-beta-D-GlcA-(1-&gt;3)-beta-D-Gal-(1-&gt;3)-beta-D-Gal-(1-&gt;4)-beta-D-Xyl}-L-seryl-[protein] + UDP + H(+). The protein operates within protein modification; protein glycosylation. It participates in glycan metabolism; heparan sulfate biosynthesis. Its pathway is glycan metabolism; heparin biosynthesis. Glycosyltransferase required for the biosynthesis of heparan-sulfate and responsible for the alternating addition of beta-1-4-linked glucuronic acid (GlcA) and alpha-1-4-linked N-acetylglucosamine (GlcNAc) units to nascent heparan sulfate chains. Botv is the trigger of heparan sulfate chain initiation and polymerization takes place by a complex of ttv and sotv. Plays a central role in the diffusion of morphogens hedgehog (hh), wingless (wg) and decapentaplegic (dpp) via its role in heparan sulfate proteoglycans (HSPGs) biosynthesis which are required for movement of hh, dpp and wg morphogens. The polypeptide is Exostosin-1 (ttv) (Drosophila melanogaster (Fruit fly)).